Here is an 89-residue protein sequence, read N- to C-terminus: uncharacterized protein (89 aa).

This sequence to Synechocystis PCC 6803 slr1025.

This is an uncharacterized protein from Ureaplasma parvum serovar 3 (strain ATCC 700970).